Reading from the N-terminus, the 732-residue chain is Catalase-peroxidase (732 aa).

The interval 1-29 (MTTESKCPFSGGGKPNTPRRGPSNQDWWP) is disordered. The tryptophyl-tyrosyl-methioninium (Trp-Tyr) (with M-249) cross-link spans 96–223 (WHSAGTYRIG…LAAVQMGLIY (128 aa)). Catalysis depends on H97, which acts as the Proton acceptor. The tryptophyl-tyrosyl-methioninium (Tyr-Met) (with W-96) cross-link spans 223–249 (YVNPEGPDGNPDPVAAARDIRETFARM). H264 serves as a coordination point for heme b.

This sequence belongs to the peroxidase family. Peroxidase/catalase subfamily. As to quaternary structure, homodimer or homotetramer. Requires heme b as cofactor. Formation of the three residue Trp-Tyr-Met cross-link is important for the catalase, but not the peroxidase activity of the enzyme.

The catalysed reaction is H2O2 + AH2 = A + 2 H2O. It carries out the reaction 2 H2O2 = O2 + 2 H2O. In terms of biological role, bifunctional enzyme with both catalase and broad-spectrum peroxidase activity. The polypeptide is Catalase-peroxidase (Serratia proteamaculans (strain 568)).